We begin with the raw amino-acid sequence, 357 residues long: Peptide chain release factor 1 (357 aa).

Gln-234 is modified (N5-methylglutamine).

It belongs to the prokaryotic/mitochondrial release factor family. Post-translationally, methylated by PrmC. Methylation increases the termination efficiency of RF1.

It is found in the cytoplasm. Its function is as follows. Peptide chain release factor 1 directs the termination of translation in response to the peptide chain termination codons UAG and UAA. This chain is Peptide chain release factor 1, found in Alkaliphilus oremlandii (strain OhILAs) (Clostridium oremlandii (strain OhILAs)).